A 477-amino-acid polypeptide reads, in one-letter code: 23S rRNA (uracil(1939)-C(5))-methyltransferase RlmD (477 aa).

In terms of domain architecture, TRAM spans 7-66 (KTENFPPDWLLVESLDLEAQGVAHRADGKVVFIKGALPFELVSANVHRKKNNWEQGVVTA). [4Fe-4S] cluster-binding residues include C79, C89, C92, and C171. The S-adenosyl-L-methionine site is built by Q280, F309, N314, E330, N365, and D386. The Nucleophile role is filled by C432.

This sequence belongs to the class I-like SAM-binding methyltransferase superfamily. RNA M5U methyltransferase family. RlmD subfamily.

It carries out the reaction uridine(1939) in 23S rRNA + S-adenosyl-L-methionine = 5-methyluridine(1939) in 23S rRNA + S-adenosyl-L-homocysteine + H(+). Catalyzes the formation of 5-methyl-uridine at position 1939 (m5U1939) in 23S rRNA. In Albidiferax ferrireducens (strain ATCC BAA-621 / DSM 15236 / T118) (Rhodoferax ferrireducens), this protein is 23S rRNA (uracil(1939)-C(5))-methyltransferase RlmD.